Here is a 332-residue protein sequence, read N- to C-terminus: L-lactate dehydrogenase A chain (332 aa).

NAD(+)-binding positions include 29 to 57 (GMVG…MEEK) and Arg-99. Residues Arg-106, Asn-138, and Arg-169 each contribute to the substrate site. Asn-138 lines the NAD(+) pocket. His-193 serves as the catalytic Proton acceptor. Position 248 (Thr-248) interacts with substrate.

It belongs to the LDH/MDH superfamily. LDH family. Homotetramer.

It is found in the cytoplasm. It carries out the reaction (S)-lactate + NAD(+) = pyruvate + NADH + H(+). Its pathway is fermentation; pyruvate fermentation to lactate; (S)-lactate from pyruvate: step 1/1. Its function is as follows. Interconverts simultaneously and stereospecifically pyruvate and lactate with concomitant interconversion of NADH and NAD(+). In Lycodichthys dearborni (Antarctic eelpout), this protein is L-lactate dehydrogenase A chain (ldha).